An 804-amino-acid polypeptide reads, in one-letter code: DNA mismatch repair protein MutS (804 aa).

614–621 (GPNMAGKS) provides a ligand contact to ATP.

The protein belongs to the DNA mismatch repair MutS family.

Its function is as follows. This protein is involved in the repair of mismatches in DNA. It is possible that it carries out the mismatch recognition step. This protein has a weak ATPase activity. This chain is DNA mismatch repair protein MutS, found in Ehrlichia ruminantium (strain Gardel).